The sequence spans 830 residues: Ribosome biogenesis protein ERB1 (830 aa).

The tract at residues 1–141 (MAPQPLKVGT…ENKDLPVDEK (141 aa)) is disordered. Acidic residues-rich tracts occupy residues 35–44 (VSEESDEEFG) and 52–109 (MSDD…DSDS). The segment covering 131-141 (EENKDLPVDEK) has biased composition (basic and acidic residues). WD repeat units follow at residues 481 to 520 (PGDT…EVWR), 523 to 563 (LHAG…APHI), 660 to 698 (KTPG…LIRT), 701 to 740 (SGVK…KPYK), 744 to 783 (YHNR…DLMQ), and 799 to 830 (IDGI…LWCS).

This sequence belongs to the WD repeat BOP1/ERB1 family. Component of the NOP7 complex, composed of ERB1, NOP7 and YTM1. The complex is held together by ERB1, which interacts with NOP7 via its N-terminal domain and with YTM1 via a high-affinity interaction between the seven-bladed beta-propeller domains of the 2 proteins. The NOP7 complex associates with the 66S pre-ribosome.

It localises to the nucleus. Its subcellular location is the nucleolus. It is found in the nucleoplasm. In terms of biological role, component of the NOP7 complex, which is required for maturation of the 25S and 5.8S ribosomal RNAs and formation of the 60S ribosome. This chain is Ribosome biogenesis protein ERB1, found in Cryptococcus neoformans var. neoformans serotype D (strain B-3501A) (Filobasidiella neoformans).